The primary structure comprises 101 residues: MAYPLEKALDVMVSTFHKYSGKEGDKFKLNKSELKELLTRELPSFLGKRTDETAFQKLMSNLDCNKDNEVDFQEYCVFLSCIAMMCNEFFEGFPDKQPRKK.

Alanine 2 bears the N-acetylalanine mark. Lysine 7 is modified (N6-acetyllysine). 2 consecutive EF-hand domains span residues 13 to 48 (VSTF…FLGK) and 50 to 85 (TDET…IAMM). 2 residues coordinate Ca(2+): lysine 28 and glutamate 33. At lysine 35 the chain carries N6-acetyllysine. Ca(2+) is bound by residues aspartate 63, asparagine 65, aspartate 67, glutamate 69, and glutamate 74.

It belongs to the S-100 family. As to quaternary structure, homodimer. Interacts with PPFIBP1 in a calcium-dependent mode. Interacts with PGLYRP1; this complex acts as a chemoattractant that promotes lymphocyte movement. Interacts with MYH9; this interaction increases cell motility. Interacts with Annexin 2/ANXA2. Interacts with TP53; this interaction promotes TP53 degradation. Interacts with CCR5 and CXCR3. Interacts with FCGR3A; this interaction inhibits PKC-dependent phosphorylation of FCGR3A.

It localises to the secreted. The protein localises to the nucleus. Its subcellular location is the cytoplasm. Functionally, calcium-binding protein that plays a role in various cellular processes including motility, angiogenesis, cell differentiation, apoptosis, and autophagy. Increases cell motility and invasiveness by interacting with non-muscle myosin heavy chain (NMMHC) IIA/MYH9. Mechanistically, promotes filament depolymerization and increases the amount of soluble myosin-IIA, resulting in the formation of stable protrusions facilitating chemotaxis. Also modulates the pro-apoptotic function of TP53 by binding to its C-terminal transactivation domain within the nucleus and reducing its protein levels. Within the extracellular space, stimulates cytokine production including granulocyte colony-stimulating factor and CCL24 from T-lymphocytes. In addition, stimulates T-lymphocyte chemotaxis by acting as a chemoattractant complex with PGLYRP1 that promotes lymphocyte migration via CCR5 and CXCR3 receptors. This Bos taurus (Bovine) protein is Protein S100-A4 (S100A4).